The following is a 184-amino-acid chain: Phosphopantetheine adenylyltransferase (184 aa).

Substrate is bound at residue serine 8. Residues 8–9 (SF) and histidine 16 contribute to the ATP site. Residues lysine 40, leucine 74, and arginine 88 each contribute to the substrate site. Residues 89-91 (GLR), glutamate 99, and 123-129 (WSFVSST) each bind ATP.

The protein belongs to the bacterial CoaD family. Homohexamer. Mg(2+) is required as a cofactor.

The protein localises to the cytoplasm. It catalyses the reaction (R)-4'-phosphopantetheine + ATP + H(+) = 3'-dephospho-CoA + diphosphate. It participates in cofactor biosynthesis; coenzyme A biosynthesis; CoA from (R)-pantothenate: step 4/5. Reversibly transfers an adenylyl group from ATP to 4'-phosphopantetheine, yielding dephospho-CoA (dPCoA) and pyrophosphate. In Deinococcus geothermalis (strain DSM 11300 / CIP 105573 / AG-3a), this protein is Phosphopantetheine adenylyltransferase.